Reading from the N-terminus, the 340-residue chain is Ferrochelatase (340 aa).

The Fe cation site is built by His-189 and Glu-292.

It belongs to the ferrochelatase family.

Its subcellular location is the cytoplasm. It carries out the reaction heme b + 2 H(+) = protoporphyrin IX + Fe(2+). It participates in porphyrin-containing compound metabolism; protoheme biosynthesis; protoheme from protoporphyrin-IX: step 1/1. Functionally, catalyzes the ferrous insertion into protoporphyrin IX. The chain is Ferrochelatase from Pseudomonas fluorescens biotype C.